We begin with the raw amino-acid sequence, 218 residues long: Histone H1 (218 aa).

The segment covering methionine 1–alanine 19 has biased composition (low complexity). 2 disordered regions span residues methionine 1–threonine 42 and valine 89–lysine 218. The residue at position 2 (serine 2) is an N-acetylserine. The H15 domain maps to alanine 37–lysine 110. Basic residues-rich tracts occupy residues lysine 118–alanine 133, lysine 141–lysine 158, lysine 166–alanine 184, and lysine 191–lysine 218.

It belongs to the histone H1/H5 family.

The protein localises to the nucleus. It is found in the chromosome. Its function is as follows. Histones H1 are necessary for the condensation of nucleosome chains into higher-order structures. In Gallus gallus (Chicken), this protein is Histone H1.